Reading from the N-terminus, the 417-residue chain is NADH-quinone oxidoreductase subunit D (417 aa).

This sequence belongs to the complex I 49 kDa subunit family. As to quaternary structure, NDH-1 is composed of 14 different subunits. Subunits NuoB, C, D, E, F, and G constitute the peripheral sector of the complex.

Its subcellular location is the cell inner membrane. The catalysed reaction is a quinone + NADH + 5 H(+)(in) = a quinol + NAD(+) + 4 H(+)(out). Its function is as follows. NDH-1 shuttles electrons from NADH, via FMN and iron-sulfur (Fe-S) centers, to quinones in the respiratory chain. The immediate electron acceptor for the enzyme in this species is believed to be ubiquinone. Couples the redox reaction to proton translocation (for every two electrons transferred, four hydrogen ions are translocated across the cytoplasmic membrane), and thus conserves the redox energy in a proton gradient. The protein is NADH-quinone oxidoreductase subunit D of Leptothrix cholodnii (strain ATCC 51168 / LMG 8142 / SP-6) (Leptothrix discophora (strain SP-6)).